The primary structure comprises 468 residues: Beta-monoglucosyldiacylglycerol synthase (468 aa).

A run of 4 helical transmembrane segments spans residues 51 to 71 (AALVLTIVWSGTIALHLVSWG), 72 to 92 (SIFILGLTTVLGIHALGVVFA), 361 to 381 (FMLTMYILPTAAIPDLLMAVV), and 387 to 407 (MLGPVTGLSVTMSVVGMFAGL).

Belongs to the glycosyltransferase 2 family. Mg(2+) serves as cofactor.

It is found in the membrane. The enzyme catalyses a 1,2-diacyl-sn-glycerol + UDP-alpha-D-glucose = a 1,2-diacyl-3-O-(beta-D-glucopyranosyl)-sn-glycerol + UDP + H(+). Glucosyltransferase involved in the biosynthesis of the non-bilayer-forming membrane lipid beta-monoglucosyldiacylglycerol which contributes to regulate the properties and stability of the membrane. Catalyzes the transfer of a glucosyl residue from UDP-Glc to diacylglycerol (DAG) acceptor to form the corresponding beta-glucosyl-DAG (1,2-diacyl-3-O-(beta-D-glucopyranosyl)-sn-glycerol). It can only use UDP-Glc as sugar donor. The sequence is that of Beta-monoglucosyldiacylglycerol synthase from Trichormus variabilis (strain ATCC 29413 / PCC 7937) (Anabaena variabilis).